We begin with the raw amino-acid sequence, 30 residues long: Cycloviolacin-O5 (30 aa).

Residues 1–30 (GTPCGESCVWIPCISSAVGCSCKNKVCYKN) constitute a cross-link (cyclopeptide (Gly-Asn)). 3 cysteine pairs are disulfide-bonded: Cys-4/Cys-20, Cys-8/Cys-22, and Cys-13/Cys-27.

In terms of processing, this is a cyclic peptide.

In terms of biological role, probably participates in a plant defense mechanism. The sequence is that of Cycloviolacin-O5 from Viola odorata (Sweet violet).